We begin with the raw amino-acid sequence, 201 residues long: Ribonuclease HII (201 aa).

One can recognise an RNase H type-2 domain in the interval 11–201 (LRECGCDEAG…VVDADRPTTE (191 aa)). The a divalent metal cation site is built by Asp-17, Glu-18, and Asp-109.

This sequence belongs to the RNase HII family. Mn(2+) is required as a cofactor. It depends on Mg(2+) as a cofactor.

The protein localises to the cytoplasm. The catalysed reaction is Endonucleolytic cleavage to 5'-phosphomonoester.. Functionally, endonuclease that specifically degrades the RNA of RNA-DNA hybrids. This chain is Ribonuclease HII (rnhB), found in Porphyromonas gingivalis (strain ATCC BAA-308 / W83).